Consider the following 509-residue polypeptide: Maturase K (509 aa).

It belongs to the intron maturase 2 family. MatK subfamily.

The protein resides in the plastid. Its subcellular location is the chloroplast. In terms of biological role, usually encoded in the trnK tRNA gene intron. Probably assists in splicing its own and other chloroplast group II introns. This chain is Maturase K, found in Amentotaxus argotaenia (Chinese flowering yew).